Consider the following 260-residue polypeptide: uncharacterized protein (260 aa).

Residues 1–22 (MKSIKRIGLCISLLILIIFATS) form the signal peptide. The N-palmitoyl cysteine moiety is linked to residue cysteine 23. The S-diacylglycerol cysteine moiety is linked to residue cysteine 23.

This sequence belongs to the staphylococcal tandem lipoprotein family.

It is found in the cell membrane. This is an uncharacterized protein from Staphylococcus aureus (strain N315).